Here is an 835-residue protein sequence, read N- to C-terminus: Cap-specific mRNA (nucleoside-2'-O-)-methyltransferase 1 (835 aa).

A disordered region spans residues Met-1 to Phe-67. A Bipartite nuclear localization signal motif is present at residues Lys-2–Arg-19. Ser-28, Ser-31, Ser-53, Ser-66, and Ser-91 each carry phosphoserine. The segment covering Ser-37 to Asp-54 has biased composition (polar residues). Residues Thr-57–Phe-67 show a composition bias toward basic and acidic residues. The G-patch domain maps to Tyr-87–Arg-133. At Lys-108 the chain carries N6-acetyllysine. Residues Lys-203–Asp-207 and Arg-218 each bind substrate. One can recognise a RrmJ-type SAM-dependent 2'-O-MTase domain in the interval Phe-231–Lys-450. Residue Asn-234 coordinates S-adenosyl-L-methionine. The active site involves Lys-239. S-adenosyl-L-methionine is bound by residues Cys-277–Phe-283 and Asp-335–Ile-336. Residue Asp-364 is part of the active site. Asn-374–Gln-376 is a substrate binding site. The active-site Proton acceptor is the Lys-404. Asn-439 provides a ligand contact to substrate. Positions Ser-727–Ala-835 are interaction with POLR2A. The region spanning Arg-752–Asp-786 is the WW domain.

In terms of assembly, interacts with POLR2A (via C-terminus).

It is found in the nucleus. The enzyme catalyses a 5'-end (N(7)-methyl 5'-triphosphoguanosine)-ribonucleoside in mRNA + S-adenosyl-L-methionine = a 5'-end (N(7)-methyl 5'-triphosphoguanosine)-(2'-O-methyl-ribonucleoside) in mRNA + S-adenosyl-L-homocysteine + H(+). S-adenosyl-L-methionine-dependent methyltransferase that mediates mRNA cap1 2'-O-ribose methylation to the 5'-cap structure of mRNAs. Methylates the ribose of the first nucleotide of a m(7)GpppG-capped mRNA and small nuclear RNA (snRNA) to produce m(7)GpppRm (cap1). Displays a preference for cap0 transcripts. Cap1 modification is linked to higher levels of translation. May be involved in the interferon response pathway. The sequence is that of Cap-specific mRNA (nucleoside-2'-O-)-methyltransferase 1 (CMTR1) from Homo sapiens (Human).